Here is a 69-residue protein sequence, read N- to C-terminus: MSVLTPLLLRGLAGSARRLPVPRAQIHSKPPREQLGTMDVAIGITSCFLCFLLPAGWVLSHLESYKKRE.

A mitochondrion-targeting transit peptide spans 1-25 (MSVLTPLLLRGLAGSARRLPVPRAQ). Positions 2 to 19 (SVLTPLLLRGLAGSARRL) match the SIFI-degron motif. At 26-36 (IHSKPPREQLG) the chain is on the mitochondrial matrix side. The chain crosses the membrane as a helical span at residues 37–60 (TMDVAIGITSCFLCFLLPAGWVLS). The Mitochondrial intermembrane portion of the chain corresponds to 61-69 (HLESYKKRE).

It belongs to the cytochrome c oxidase VIII family. As to quaternary structure, component of the cytochrome c oxidase (complex IV, CIV), a multisubunit enzyme composed of 14 subunits. The complex is composed of a catalytic core of 3 subunits MT-CO1, MT-CO2 and MT-CO3, encoded in the mitochondrial DNA, and 11 supernumerary subunits COX4I, COX5A, COX5B, COX6A, COX6B, COX6C, COX7A, COX7B, COX7C, COX8 and NDUFA4, which are encoded in the nuclear genome. The complex exists as a monomer or a dimer and forms supercomplexes (SCs) in the inner mitochondrial membrane with NADH-ubiquinone oxidoreductase (complex I, CI) and ubiquinol-cytochrome c oxidoreductase (cytochrome b-c1 complex, complex III, CIII), resulting in different assemblies (supercomplex SCI(1)III(2)IV(1) and megacomplex MCI(2)III(2)IV(2)). In response to mitochondrial stress, the precursor protein is ubiquitinated by the SIFI complex in the cytoplasm before mitochondrial import, leading to its degradation. Within the SIFI complex, UBR4 initiates ubiquitin chain that are further elongated or branched by KCMF1.

It localises to the mitochondrion inner membrane. Its pathway is energy metabolism; oxidative phosphorylation. In terms of biological role, component of the cytochrome c oxidase, the last enzyme in the mitochondrial electron transport chain which drives oxidative phosphorylation. The respiratory chain contains 3 multisubunit complexes succinate dehydrogenase (complex II, CII), ubiquinol-cytochrome c oxidoreductase (cytochrome b-c1 complex, complex III, CIII) and cytochrome c oxidase (complex IV, CIV), that cooperate to transfer electrons derived from NADH and succinate to molecular oxygen, creating an electrochemical gradient over the inner membrane that drives transmembrane transport and the ATP synthase. Cytochrome c oxidase is the component of the respiratory chain that catalyzes the reduction of oxygen to water. Electrons originating from reduced cytochrome c in the intermembrane space (IMS) are transferred via the dinuclear copper A center (CU(A)) of subunit 2 and heme A of subunit 1 to the active site in subunit 1, a binuclear center (BNC) formed by heme A3 and copper B (CU(B)). The BNC reduces molecular oxygen to 2 water molecules using 4 electrons from cytochrome c in the IMS and 4 protons from the mitochondrial matrix. The polypeptide is Cytochrome c oxidase subunit 8A, mitochondrial (COX8A) (Carlito syrichta (Philippine tarsier)).